We begin with the raw amino-acid sequence, 258 residues long: Flagellin B3 (258 aa).

Residues 1-8 (MRFLKKRG) constitute a propeptide that is removed on maturation.

The protein belongs to the archaeal flagellin family.

It localises to the archaeal flagellum. Flagellin is the subunit protein which polymerizes to form the filaments of archaeal flagella. This chain is Flagellin B3 (flaB3), found in Thermococcus kodakarensis (strain ATCC BAA-918 / JCM 12380 / KOD1) (Pyrococcus kodakaraensis (strain KOD1)).